Consider the following 331-residue polypeptide: 6-phosphogluconolactonase (331 aa).

It belongs to the cycloisomerase 2 family.

The catalysed reaction is 6-phospho-D-glucono-1,5-lactone + H2O = 6-phospho-D-gluconate + H(+). It participates in carbohydrate degradation; pentose phosphate pathway; D-ribulose 5-phosphate from D-glucose 6-phosphate (oxidative stage): step 2/3. Catalyzes the hydrolysis of 6-phosphogluconolactone to 6-phosphogluconate. The chain is 6-phosphogluconolactonase from Salmonella paratyphi A (strain ATCC 9150 / SARB42).